The chain runs to 350 residues: Alcohol dehydrogenase 1 (350 aa).

Zn(2+) is bound by residues Cys-46, His-69, Cys-100, Cys-103, Cys-106, Cys-114, and Cys-156. Residues 180–186, Asp-204, Lys-209, 271–273, and Arg-343 each bind NAD(+); these read GAGGGLG and VGL.

Belongs to the zinc-containing alcohol dehydrogenase family. As to quaternary structure, homotetramer. Requires Zn(2+) as cofactor.

The protein localises to the cytoplasm. The enzyme catalyses a primary alcohol + NAD(+) = an aldehyde + NADH + H(+). It catalyses the reaction a secondary alcohol + NAD(+) = a ketone + NADH + H(+). The chain is Alcohol dehydrogenase 1 (ADH1) from Candida albicans (Yeast).